Reading from the N-terminus, the 163-residue chain is Nucleotide-binding protein Dde_2479 (163 aa).

This sequence belongs to the YajQ family.

Functionally, nucleotide-binding protein. This chain is Nucleotide-binding protein Dde_2479, found in Oleidesulfovibrio alaskensis (strain ATCC BAA-1058 / DSM 17464 / G20) (Desulfovibrio alaskensis).